The sequence spans 171 residues: Endoribonuclease YbeY (171 aa).

Residues H126, H130, and H136 each contribute to the Zn(2+) site.

Belongs to the endoribonuclease YbeY family. The cofactor is Zn(2+).

It is found in the cytoplasm. Single strand-specific metallo-endoribonuclease involved in late-stage 70S ribosome quality control and in maturation of the 3' terminus of the 16S rRNA. The polypeptide is Endoribonuclease YbeY (Rhizobium etli (strain CIAT 652)).